A 47-amino-acid chain; its full sequence is Small, acid-soluble spore protein N (47 aa).

The disordered stretch occupies residues 1–47 (MSNPKRSPNHFAPNHIGTQPRAAGGNKGKQMQDQSGQHAQVIQTKGE). Polar residues predominate over residues 29 to 47 (KQMQDQSGQHAQVIQTKGE).

Belongs to the SspN family.

It localises to the spore core. The polypeptide is Small, acid-soluble spore protein N (Geobacillus thermodenitrificans (strain NG80-2)).